We begin with the raw amino-acid sequence, 101 residues long: Small ribosomal subunit protein bS21 (101 aa).

The span at 36 to 52 shows a compositional bias: basic and acidic residues; that stretch reads YEKPSEKKAREKAEAVR. A disordered region spans residues 36-101; sequence YEKPSEKKAR…GPGAGPRGPR (66 aa). The span at 53–62 shows a compositional bias: basic residues; that stretch reads RARKLARKKL. The span at 83-101 shows a compositional bias: gly residues; it reads PGAGGPGAGGPGAGPRGPR.

This sequence belongs to the bacterial ribosomal protein bS21 family.

This chain is Small ribosomal subunit protein bS21, found in Rhodopseudomonas palustris (strain HaA2).